Here is a 211-residue protein sequence, read N- to C-terminus: NADH-quinone oxidoreductase subunit A (211 aa).

The next 3 helical transmembrane spans lie at 7–27 (WSAL…LVVP), 61–81 (FYLV…LYAY), and 88–108 (VGWI…IGLI).

This sequence belongs to the complex I subunit 3 family. NDH-1 is composed of 14 different subunits. Subunits NuoA, H, J, K, L, M, N constitute the membrane sector of the complex.

It is found in the cell inner membrane. It catalyses the reaction a quinone + NADH + 5 H(+)(in) = a quinol + NAD(+) + 4 H(+)(out). Functionally, NDH-1 shuttles electrons from NADH, via FMN and iron-sulfur (Fe-S) centers, to quinones in the respiratory chain. The immediate electron acceptor for the enzyme in this species is believed to be ubiquinone. Couples the redox reaction to proton translocation (for every two electrons transferred, four hydrogen ions are translocated across the cytoplasmic membrane), and thus conserves the redox energy in a proton gradient. The chain is NADH-quinone oxidoreductase subunit A from Psychrobacter sp. (strain PRwf-1).